Here is a 904-residue protein sequence, read N- to C-terminus: Translation initiation factor IF-2 (904 aa).

Disordered regions lie at residues 134–248 (RQRN…GSHV) and 267–315 (HLSA…FERP). The segment covering 136–177 (RNLDEQQRLAESDRVRDEEIQRKRDEEQAAKDRAEAERKAAE) has biased composition (basic and acidic residues). Composition is skewed to low complexity over residues 178–230 (EAAA…STPA) and 285–303 (GRPG…RGSN). Positions 403 to 572 (TRPPVVTIMG…SLQAEVLELK (170 aa)) constitute a tr-type G domain. The segment at 412–419 (GHVDHGKT) is G1. Position 412 to 419 (412 to 419 (GHVDHGKT)) interacts with GTP. Positions 437–441 (GITQH) are G2. Positions 458-461 (DTPG) are G3. GTP-binding positions include 458 to 462 (DTPGH) and 512 to 515 (NKID). The tract at residues 512–515 (NKID) is G4. Residues 548–550 (SAK) form a G5 region.

Belongs to the TRAFAC class translation factor GTPase superfamily. Classic translation factor GTPase family. IF-2 subfamily.

It is found in the cytoplasm. Its function is as follows. One of the essential components for the initiation of protein synthesis. Protects formylmethionyl-tRNA from spontaneous hydrolysis and promotes its binding to the 30S ribosomal subunits. Also involved in the hydrolysis of GTP during the formation of the 70S ribosomal complex. This Xanthomonas oryzae pv. oryzae (strain PXO99A) protein is Translation initiation factor IF-2.